Here is a 646-residue protein sequence, read N- to C-terminus: DNA mismatch repair protein MutL (646 aa).

Disordered regions lie at residues 356–380 and 415–452; these read FENR…NENS and TKNS…AKPH. The segment covering 424 to 436 has biased composition (low complexity); the sequence is SEATSNEAASAEI.

This sequence belongs to the DNA mismatch repair MutL/HexB family.

Its function is as follows. This protein is involved in the repair of mismatches in DNA. It is required for dam-dependent methyl-directed DNA mismatch repair. May act as a 'molecular matchmaker', a protein that promotes the formation of a stable complex between two or more DNA-binding proteins in an ATP-dependent manner without itself being part of a final effector complex. In Staphylococcus carnosus (strain TM300), this protein is DNA mismatch repair protein MutL.